The following is an 886-amino-acid chain: MAANGGGGGAGGCSNGGGGGAVNGAAANGGGGGGGGSKGATTRRAKVSPMDRYWVPTDEKEMAAAVADGGEDGRRPLLFRTFTVRGILLHPYRLLTLVRLVAIVLFFIWRIRHPYADGMFFWWISVIGDFWFGVSWLLNQVAKLKPIRRVPDLNLLQQQFDLPDGNSNLPGLDVFINTVDPINEPMIYTMNAILSILAADYPVDKHACYLSDDGGSIIHYDGLLETAKFAALWVPFCRKHSIEPRAPESYFAVKSRPYAGSAPEDFLSDHRYMRREYDEFKVRLDALFTVIPKRSDAYNQAHAEEGVKATWMADGTEWPGTWIDPSENHKKGNHAGIVQVMLNHPSNQPQLGLPASTDSPVDFSNVDVRLPMLVYIAREKRPGYDHQKKAGAMNVQLRVSALLTNAPFIINFDGDHYVNNSKAFRAGICFMLDRREGDNTAFVQFPQRFDDVDPTDRYCNHNRVFFDATLLGLNGIQGPSYVGTGCMFRRVALYGVDPPRWRPDDGNIVDSSKKFGNLDSFISSIPIAANQERSIISPPALEESILQELSDAMACAYEDGTDWGKDVGWVYNIATEDVVTGFRLHRTGWRSMYCRMEPDAFRGTAPINLTERLYQILRWSGGSLEMFFSHNCPLLAGRRLNFMQRIAYINMTGYPVTSVFLLFYLLFPVIWIFRGIFYIQKPFPTYVLYLVIVIFMSEMIGMVEIKWAGLTLLDWIRNEQFYIIGATAVYPLAVLHIVLKCFGLKGVSFKLTAKQVASSTSEKFAELYDVQWAPLLFPTIVVIAVNICAIGAAIGKALFGGWSLMQMGDASLGLVFNVWILLLIYPFALGIMGRWSKRPYILFVLIVISFVIIALADIAIQAMRSGSVRLHFRRSGGANFPTSWGF.

2 helical membrane passes run 87-107 (ILLH…VLFF) and 118-138 (GMFF…SWLL). Residue Asp213 is part of the active site. Substrate is bound by residues Asp413 and Asp415. The active site involves Asp577. 6 helical membrane-spanning segments follow: residues 659-679 (VFLL…IFYI), 683-703 (FPTY…IGMV), 723-743 (IIGA…KCFG), 775-795 (LLFP…AAIG), 812-832 (LGLV…LGIM), and 840-860 (YILF…DIAI).

The protein belongs to the glycosyltransferase 2 family. Plant cellulose synthase-like F subfamily.

The protein resides in the golgi apparatus membrane. May catalyze both beta-1,3 and beta-1,4 glycosidic linkage on beta-D-glucan. Essential for (1,3;1,4)-beta-D-glucans synthesis in grasses and cereals (Poaceae). The mixed-linked glucans (which are not present in walls of dicotyledons or most other monocotyledonous plants) are particularly important constituents of the walls of the starchy endosperm and aleurone cells of cereal grains such as oats, wheat, rice and barley. They can account for up to 70% by weight of the wall. The protein is Probable mixed-linked glucan synthase 8 (CSFL8) of Oryza sativa subsp. japonica (Rice).